The primary structure comprises 297 residues: tRNA pseudouridine synthase B (297 aa).

Catalysis depends on aspartate 39, which acts as the Nucleophile.

It belongs to the pseudouridine synthase TruB family. Type 1 subfamily.

It catalyses the reaction uridine(55) in tRNA = pseudouridine(55) in tRNA. In terms of biological role, responsible for synthesis of pseudouridine from uracil-55 in the psi GC loop of transfer RNAs. This is tRNA pseudouridine synthase B from Lactobacillus johnsonii (strain CNCM I-12250 / La1 / NCC 533).